A 453-amino-acid polypeptide reads, in one-letter code: Ribulose bisphosphate carboxylase large chain (453 aa).

The propeptide occupies 1–2 (MS). N-acetylproline is present on Pro3. Lys14 bears the N6,N6,N6-trimethyllysine mark. Substrate is bound by residues Asn123 and Thr173. The active-site Proton acceptor is the Lys175. Residue Lys177 participates in substrate binding. 3 residues coordinate Mg(2+): Lys201, Asp203, and Glu204. Lys201 is subject to N6-carboxylysine. His294 acts as the Proton acceptor in catalysis. Positions 295, 327, and 379 each coordinate substrate.

It belongs to the RuBisCO large chain family. Type I subfamily. Heterohexadecamer of 8 large chains and 8 small chains; disulfide-linked. The disulfide link is formed within the large subunit homodimers. Requires Mg(2+) as cofactor. The disulfide bond which can form in the large chain dimeric partners within the hexadecamer appears to be associated with oxidative stress and protein turnover.

It is found in the plastid. It localises to the chloroplast. It carries out the reaction 2 (2R)-3-phosphoglycerate + 2 H(+) = D-ribulose 1,5-bisphosphate + CO2 + H2O. It catalyses the reaction D-ribulose 1,5-bisphosphate + O2 = 2-phosphoglycolate + (2R)-3-phosphoglycerate + 2 H(+). In terms of biological role, ruBisCO catalyzes two reactions: the carboxylation of D-ribulose 1,5-bisphosphate, the primary event in carbon dioxide fixation, as well as the oxidative fragmentation of the pentose substrate in the photorespiration process. Both reactions occur simultaneously and in competition at the same active site. This is Ribulose bisphosphate carboxylase large chain from Galium corsicum.